The primary structure comprises 301 residues: Bifunctional protein FolD (301 aa).

NADP(+) is bound by residues 169–171 (GRS), S194, and I235.

This sequence belongs to the tetrahydrofolate dehydrogenase/cyclohydrolase family. Homodimer.

The catalysed reaction is (6R)-5,10-methylene-5,6,7,8-tetrahydrofolate + NADP(+) = (6R)-5,10-methenyltetrahydrofolate + NADPH. The enzyme catalyses (6R)-5,10-methenyltetrahydrofolate + H2O = (6R)-10-formyltetrahydrofolate + H(+). The protein operates within one-carbon metabolism; tetrahydrofolate interconversion. Its function is as follows. Catalyzes the oxidation of 5,10-methylenetetrahydrofolate to 5,10-methenyltetrahydrofolate and then the hydrolysis of 5,10-methenyltetrahydrofolate to 10-formyltetrahydrofolate. The sequence is that of Bifunctional protein FolD from Gloeothece citriformis (strain PCC 7424) (Cyanothece sp. (strain PCC 7424)).